The chain runs to 457 residues: MDHLPIFCQLRDRDCLIVGGGDVAERKARLLLDAGARLTVNALAFIPQFTAWADAGMLTLVEGPFDESLLDTCWLAIAATDDDALNQRVSEAAEARRIFCNVVDAPKAASFIMPSIIDRSPLMVAVSSGGTSPVLARLLREKLESLLPLHLGQVAKYAGQLRGRVKQQFATMGERRRFWEKLFVNDRLAQSLANNDQKAITETTEQLINEPLDHRGEVVLVGAGPGDAGLLTLKGLQQIQQADVVVYDRLISDDIMNLVRRDADRVFVGKRAGYHCVPQEEINQILLREAQKGKRVVRLKGGDPFIFGRGGEELETLCNAGIPFSVVPGITAASGCSAYSGIPLTHRDYAQSVRLITGHLKTGGELDWENLAAEKQTLVFYMGLNQAATIQQKLIEYGMPGEMPVAIVENGTAVTQRVIDGTLTQLGELAQQMNSPSLIIIGRVVGLRDKLNWFSNH.

The precorrin-2 dehydrogenase /sirohydrochlorin ferrochelatase stretch occupies residues 1-204 (MDHLPIFCQL…NDQKAITETT (204 aa)). Residues 22 to 23 (DV) and 43 to 44 (LA) contribute to the NAD(+) site. S128 carries the phosphoserine modification. Residues 216–457 (GEVVLVGAGP…RDKLNWFSNH (242 aa)) form a uroporphyrinogen-III C-methyltransferase region. P225 contributes to the S-adenosyl-L-methionine binding site. Catalysis depends on D248, which acts as the Proton acceptor. The Proton donor role is filled by K270. S-adenosyl-L-methionine is bound by residues 301-303 (GGD), I306, 331-332 (TA), M382, and G411.

This sequence in the N-terminal section; belongs to the precorrin-2 dehydrogenase / sirohydrochlorin ferrochelatase family. In the C-terminal section; belongs to the precorrin methyltransferase family.

It catalyses the reaction uroporphyrinogen III + 2 S-adenosyl-L-methionine = precorrin-2 + 2 S-adenosyl-L-homocysteine + H(+). It carries out the reaction precorrin-2 + NAD(+) = sirohydrochlorin + NADH + 2 H(+). The enzyme catalyses siroheme + 2 H(+) = sirohydrochlorin + Fe(2+). The protein operates within cofactor biosynthesis; adenosylcobalamin biosynthesis; precorrin-2 from uroporphyrinogen III: step 1/1. It functions in the pathway cofactor biosynthesis; adenosylcobalamin biosynthesis; sirohydrochlorin from precorrin-2: step 1/1. It participates in porphyrin-containing compound metabolism; siroheme biosynthesis; precorrin-2 from uroporphyrinogen III: step 1/1. Its pathway is porphyrin-containing compound metabolism; siroheme biosynthesis; siroheme from sirohydrochlorin: step 1/1. The protein operates within porphyrin-containing compound metabolism; siroheme biosynthesis; sirohydrochlorin from precorrin-2: step 1/1. Its function is as follows. Multifunctional enzyme that catalyzes the SAM-dependent methylations of uroporphyrinogen III at position C-2 and C-7 to form precorrin-2 via precorrin-1. Then it catalyzes the NAD-dependent ring dehydrogenation of precorrin-2 to yield sirohydrochlorin. Finally, it catalyzes the ferrochelation of sirohydrochlorin to yield siroheme. This chain is Siroheme synthase, found in Escherichia coli O81 (strain ED1a).